The following is a 346-amino-acid chain: Holliday junction branch migration complex subunit RuvB (346 aa).

The segment at 2-183 (TDDRIIGAGA…FGIVQRLEFY (182 aa)) is large ATPase domain (RuvB-L). ATP is bound by residues Ile22, Arg23, Gly64, Lys67, Thr68, Thr69, 130–132 (EDF), Arg173, Tyr183, and Arg220. Thr68 serves as a coordination point for Mg(2+). The segment at 184–254 (SVEELTRIVR…VAQAAMKMLK (71 aa)) is small ATPAse domain (RuvB-S). The segment at 257–346 (PEGFDELDRR…DLFAEVPDVG (90 aa)) is head domain (RuvB-H). Residues Arg293, Arg312, and Arg317 each coordinate DNA.

Belongs to the RuvB family. In terms of assembly, homohexamer. Forms an RuvA(8)-RuvB(12)-Holliday junction (HJ) complex. HJ DNA is sandwiched between 2 RuvA tetramers; dsDNA enters through RuvA and exits via RuvB. An RuvB hexamer assembles on each DNA strand where it exits the tetramer. Each RuvB hexamer is contacted by two RuvA subunits (via domain III) on 2 adjacent RuvB subunits; this complex drives branch migration. In the full resolvosome a probable DNA-RuvA(4)-RuvB(12)-RuvC(2) complex forms which resolves the HJ.

The protein resides in the cytoplasm. It catalyses the reaction ATP + H2O = ADP + phosphate + H(+). Its function is as follows. The RuvA-RuvB-RuvC complex processes Holliday junction (HJ) DNA during genetic recombination and DNA repair, while the RuvA-RuvB complex plays an important role in the rescue of blocked DNA replication forks via replication fork reversal (RFR). RuvA specifically binds to HJ cruciform DNA, conferring on it an open structure. The RuvB hexamer acts as an ATP-dependent pump, pulling dsDNA into and through the RuvAB complex. RuvB forms 2 homohexamers on either side of HJ DNA bound by 1 or 2 RuvA tetramers; 4 subunits per hexamer contact DNA at a time. Coordinated motions by a converter formed by DNA-disengaged RuvB subunits stimulates ATP hydrolysis and nucleotide exchange. Immobilization of the converter enables RuvB to convert the ATP-contained energy into a lever motion, pulling 2 nucleotides of DNA out of the RuvA tetramer per ATP hydrolyzed, thus driving DNA branch migration. The RuvB motors rotate together with the DNA substrate, which together with the progressing nucleotide cycle form the mechanistic basis for DNA recombination by continuous HJ branch migration. Branch migration allows RuvC to scan DNA until it finds its consensus sequence, where it cleaves and resolves cruciform DNA. The chain is Holliday junction branch migration complex subunit RuvB from Stenotrophomonas maltophilia (strain K279a).